We begin with the raw amino-acid sequence, 383 residues long: 8-amino-7-oxononanoate synthase (383 aa).

Arginine 22 serves as a coordination point for substrate. 109–110 is a pyridoxal 5'-phosphate binding site; the sequence is GF. Histidine 134 lines the substrate pocket. Pyridoxal 5'-phosphate contacts are provided by serine 178, histidine 206, and threonine 232. Lysine 235 is modified (N6-(pyridoxal phosphate)lysine). A substrate-binding site is contributed by threonine 348.

This sequence belongs to the class-II pyridoxal-phosphate-dependent aminotransferase family. BioF subfamily. As to quaternary structure, homodimer. The cofactor is pyridoxal 5'-phosphate.

The enzyme catalyses 6-carboxyhexanoyl-[ACP] + L-alanine + H(+) = (8S)-8-amino-7-oxononanoate + holo-[ACP] + CO2. Its pathway is cofactor biosynthesis; biotin biosynthesis. Catalyzes the decarboxylative condensation of pimeloyl-[acyl-carrier protein] and L-alanine to produce 8-amino-7-oxononanoate (AON), [acyl-carrier protein], and carbon dioxide. The protein is 8-amino-7-oxononanoate synthase of Vibrio parahaemolyticus serotype O3:K6 (strain RIMD 2210633).